The primary structure comprises 508 residues: Phenylalanine--tRNA ligase alpha subunit (508 aa).

A2 carries the post-translational modification N-acetylalanine. A phosphoserine mark is found at S193 and S301. N6-acetyllysine is present on K311. L-phenylalanine-binding positions include T329, 372 to 374 (QIE), and Y412. Residue E414 participates in Mg(2+) binding. Residue F438 participates in L-phenylalanine binding.

The protein belongs to the class-II aminoacyl-tRNA synthetase family. Phe-tRNA synthetase alpha subunit type 2 subfamily. Heterotetramer; dimer of two heterodimers formed by FARSA and FARSB. Mg(2+) serves as cofactor.

It localises to the cytoplasm. The catalysed reaction is tRNA(Phe) + L-phenylalanine + ATP = L-phenylalanyl-tRNA(Phe) + AMP + diphosphate + H(+). This chain is Phenylalanine--tRNA ligase alpha subunit (Farsa), found in Rattus norvegicus (Rat).